The primary structure comprises 252 residues: Triosephosphate isomerase (252 aa).

A substrate-binding site is contributed by 10-12; it reads NWK. The active-site Electrophile is the His96. Glu168 acts as the Proton acceptor in catalysis. Substrate-binding positions include Gly174, Ser214, and 235-236; that span reads GG.

Belongs to the triosephosphate isomerase family. In terms of assembly, homodimer.

The protein resides in the cytoplasm. It carries out the reaction D-glyceraldehyde 3-phosphate = dihydroxyacetone phosphate. The protein operates within carbohydrate biosynthesis; gluconeogenesis. It participates in carbohydrate degradation; glycolysis; D-glyceraldehyde 3-phosphate from glycerone phosphate: step 1/1. In terms of biological role, involved in the gluconeogenesis. Catalyzes stereospecifically the conversion of dihydroxyacetone phosphate (DHAP) to D-glyceraldehyde-3-phosphate (G3P). In Streptococcus agalactiae serotype Ia (strain ATCC 27591 / A909 / CDC SS700), this protein is Triosephosphate isomerase.